We begin with the raw amino-acid sequence, 286 residues long: Ribosomal RNA small subunit methyltransferase A (286 aa).

His-11, Leu-13, Gly-44, Glu-65, Asp-90, and Asn-115 together coordinate S-adenosyl-L-methionine.

This sequence belongs to the class I-like SAM-binding methyltransferase superfamily. rRNA adenine N(6)-methyltransferase family. RsmA subfamily.

It is found in the cytoplasm. The catalysed reaction is adenosine(1518)/adenosine(1519) in 16S rRNA + 4 S-adenosyl-L-methionine = N(6)-dimethyladenosine(1518)/N(6)-dimethyladenosine(1519) in 16S rRNA + 4 S-adenosyl-L-homocysteine + 4 H(+). Specifically dimethylates two adjacent adenosines (A1518 and A1519) in the loop of a conserved hairpin near the 3'-end of 16S rRNA in the 30S particle. May play a critical role in biogenesis of 30S subunits. The sequence is that of Ribosomal RNA small subunit methyltransferase A from Nostoc punctiforme (strain ATCC 29133 / PCC 73102).